Reading from the N-terminus, the 61-residue chain is Large ribosomal subunit protein uL30 (61 aa).

It belongs to the universal ribosomal protein uL30 family. Part of the 50S ribosomal subunit.

The chain is Large ribosomal subunit protein uL30 from Chlorobaculum tepidum (strain ATCC 49652 / DSM 12025 / NBRC 103806 / TLS) (Chlorobium tepidum).